The sequence spans 361 residues: Histidinol-phosphate aminotransferase (361 aa).

Position 219 is an N6-(pyridoxal phosphate)lysine (Lys-219).

It belongs to the class-II pyridoxal-phosphate-dependent aminotransferase family. Histidinol-phosphate aminotransferase subfamily. Homodimer. Pyridoxal 5'-phosphate serves as cofactor.

It catalyses the reaction L-histidinol phosphate + 2-oxoglutarate = 3-(imidazol-4-yl)-2-oxopropyl phosphate + L-glutamate. It participates in amino-acid biosynthesis; L-histidine biosynthesis; L-histidine from 5-phospho-alpha-D-ribose 1-diphosphate: step 7/9. This is Histidinol-phosphate aminotransferase from Cereibacter sphaeroides (strain KD131 / KCTC 12085) (Rhodobacter sphaeroides).